A 258-amino-acid chain; its full sequence is 4-oxalmesaconate hydratase (258 aa).

Zn(2+) is bound by residues His28, Asp31, and His141.

The protein belongs to the MshB deacetylase family. It depends on Zn(2+) as a cofactor.

The enzyme catalyses 2-hydroxy-4-oxobutane-1,2,4-tricarboxylate = 4-carboxy-2-hydroxy-cis,cis-muconate + H2O. Its function is as follows. Catalyzes the conversion of oxalomesaconic acid enol (OMAenol) to 4-carboxy-4-hydroxy-2-oxoadipic acid (CHA). Mediates the third step of gallate degradation pathway. The sequence is that of 4-oxalmesaconate hydratase (galB) from Pseudomonas putida (strain ATCC 47054 / DSM 6125 / CFBP 8728 / NCIMB 11950 / KT2440).